The primary structure comprises 307 residues: UDP-N-acetylenolpyruvoylglucosamine reductase (307 aa).

The region spanning 27-193 (RVGGPADVVF…LDAVFEGLAD (167 aa)) is the FAD-binding PCMH-type domain. The active site involves arginine 172. Serine 222 functions as the Proton donor in the catalytic mechanism. Residue glutamate 299 is part of the active site.

The protein belongs to the MurB family. FAD serves as cofactor.

The protein resides in the cytoplasm. The catalysed reaction is UDP-N-acetyl-alpha-D-muramate + NADP(+) = UDP-N-acetyl-3-O-(1-carboxyvinyl)-alpha-D-glucosamine + NADPH + H(+). It participates in cell wall biogenesis; peptidoglycan biosynthesis. Its function is as follows. Cell wall formation. This is UDP-N-acetylenolpyruvoylglucosamine reductase from Caulobacter sp. (strain K31).